The primary structure comprises 248 residues: MARQFFVGGNFKANGTKQQITSIIDNLNKADLPKDVEVVICPPALYLGLAVEQNKQPTVAIGAQNVFDKSCGAFTGETCASQILDVGASWTLTGHSERRTIIKESDEFIAEKTKFALDTGVKVILCIGETLEERKGGVTLDVCARQLDAVSKIVSDWSNIVVAYEPVWAIGTGLAATPEDAEETHKGIRAHLAKSIGAEQAEKTRILYGGSVNGKNAKDFKDKANVDGFLVGGASLKPEFVDIIKSRL.

Positions 10 and 12 each coordinate substrate. His95 acts as the Electrophile in catalysis. The active-site Proton acceptor is the Glu165.

Belongs to the triosephosphate isomerase family. In terms of assembly, homodimer.

The protein localises to the cytoplasm. It catalyses the reaction D-glyceraldehyde 3-phosphate = dihydroxyacetone phosphate. It functions in the pathway carbohydrate biosynthesis; gluconeogenesis. It participates in carbohydrate degradation; glycolysis; D-glyceraldehyde 3-phosphate from glycerone phosphate: step 1/1. The sequence is that of Triosephosphate isomerase (TPI1) from Candida albicans (strain SC5314 / ATCC MYA-2876) (Yeast).